A 305-amino-acid chain; its full sequence is Sodium/potassium-transporting ATPase subunit beta-1 (305 aa).

Residues 1-32 (MAREKSTDDGGGWKKFLWDSEKKQVLGRTGTS) lie on the Cytoplasmic side of the membrane. Residues 33–53 (WFKIFVFYLIFYGCLAGIFIG) form a helical; Signal-anchor for type II membrane protein membrane-spanning segment. The Extracellular segment spans residues 54 to 305 (TIQVMLLTIS…RFEVKIEVKS (252 aa)). An N-linked (GlcNAc...) asparagine glycan is attached at Asn114. Cys127 and Cys150 form a disulfide bridge. N-linked (GlcNAc...) asparagine glycosylation is present at Asn159. A disulfide bridge links Cys160 with Cys176. Residues Asn194 and Asn267 are each glycosylated (N-linked (GlcNAc...) asparagine). An intrachain disulfide couples Cys215 to Cys278.

This sequence belongs to the X(+)/potassium ATPases subunit beta family. In terms of assembly, the sodium/potassium-transporting ATPase is composed of a catalytic alpha subunit, an auxiliary non-catalytic beta subunit and an additional regulatory subunit.

The protein resides in the cell membrane. In terms of biological role, this is the non-catalytic component of the active enzyme, which catalyzes the hydrolysis of ATP coupled with the exchange of Na(+) and K(+) ions across the plasma membrane. The beta subunit regulates, through assembly of alpha/beta heterodimers, the number of sodium pumps transported to the plasma membrane. In Tetronarce californica (Pacific electric ray), this protein is Sodium/potassium-transporting ATPase subunit beta-1 (atp1b1).